Here is a 276-residue protein sequence, read N- to C-terminus: Kallikrein-11 (276 aa).

An N-terminal signal peptide occupies residues 1 to 44; that stretch reads MRRLKSDWKLSTETREPGARPALLQARMILRLIALALVTGHVGG. A propeptide spans 45–47 (activation peptide); that stretch reads ETR. Positions 48–274 constitute a Peptidase S1 domain; that stretch reads IIKGYECRPH…YFNWIHEVMR (227 aa). Disulfide bonds link Cys54/Cys189, Cys73/Cys89, Cys168/Cys235, Cys200/Cys214, and Cys225/Cys250. Residue His88 is the Charge relay system of the active site. Asn125 carries an N-linked (GlcNAc...) asparagine glycan. The active-site Charge relay system is the Asp136. N-linked (GlcNAc...) asparagine glycans are attached at residues Asn191 and Asn207. Residue Ser229 is the Charge relay system of the active site. N-linked (GlcNAc...) asparagine glycosylation is present at Asn236.

Belongs to the peptidase S1 family. Kallikrein subfamily. Expressed in brain and prostate (isoform 1) and prostate (isoform 2).

It is found in the secreted. Functionally, possible multifunctional protease. Efficiently cleaves 'bz-Phe-Arg-4-methylcoumaryl-7-amide', a kallikrein substrate, and weakly cleaves other substrates for kallikrein and trypsin. The protein is Kallikrein-11 (Klk11) of Mus musculus (Mouse).